Consider the following 466-residue polypeptide: Alpha-1A adrenergic receptor (466 aa).

At 1 to 27 (MVLLSENASEGSNCTHPPAQVNISKAI) the chain is on the extracellular side. 3 N-linked (GlcNAc...) asparagine glycosylation sites follow: Asn-7, Asn-13, and Asn-22. Residues 28–51 (LLGVILGGLIIFGVLGNILVILSV) form a helical membrane-spanning segment. At 52–64 (ACHRHLHSVTHYY) the chain is on the cytoplasmic side. Residues 65–88 (IVNLAVADLLLTSTVLPFSAIFEI) traverse the membrane as a helical segment. Topologically, residues 89 to 99 (LGYWAFGRVFC) are extracellular. A disulfide bridge links Cys-99 with Cys-176. The chain crosses the membrane as a helical span at residues 100–122 (NIWAAVDVLCCTASIMGLCIISI). Residues 123–143 (DRYIGVSYPLRYPTIVTQRRG) lie on the Cytoplasmic side of the membrane. The helical transmembrane segment at 144-167 (VRALLCVWALSLVISIGPLFGWRQ) threads the bilayer. The Extracellular segment spans residues 168 to 181 (QAPEDETICQINEE). The chain crosses the membrane as a helical span at residues 182–205 (PGYVLFSALGSFYVPLTIILVMYC). The Cytoplasmic segment spans residues 206–273 (RVYVVAKRES…FSREKKAAKT (68 aa)). Ser-215 is modified (phosphoserine; by PKA). A helical transmembrane segment spans residues 274–297 (LGIVVGCFVLCWLPFFLVMPIGSF). The Extracellular segment spans residues 298 to 305 (FPNFKPPE). The chain crosses the membrane as a helical span at residues 306-329 (TVFKIVFWLGYLNSCINPIIYPCS). The Cytoplasmic segment spans residues 330–466 (SQEFKKAFQN…ISLGENGEEV (137 aa)). The short motif at 334–349 (KKAFQNVLRIQCLRRR) is the Nuclear localization signal element. A lipid anchor (S-palmitoyl cysteine) is attached at Cys-345.

It belongs to the G-protein coupled receptor 1 family. Adrenergic receptor subfamily. ADRA1A sub-subfamily. In terms of assembly, homo- and heterooligomer. Heterooligomerizes with ADRA1B homooligomers in cardiac myocytes. Interacts with CAVIN4.

The protein resides in the nucleus membrane. It is found in the cell membrane. The protein localises to the cytoplasm. Its subcellular location is the membrane. It localises to the caveola. Its function is as follows. This alpha-adrenergic receptor mediates its action by association with G proteins that activate a phosphatidylinositol-calcium second messenger system. Its effect is mediated by G(q) and G(11) proteins. Nuclear ADRA1A-ADRA1B heterooligomers regulate phenylephrine (PE)-stimulated ERK signaling in cardiac myocytes. The protein is Alpha-1A adrenergic receptor (Adra1a) of Mus musculus (Mouse).